We begin with the raw amino-acid sequence, 552 residues long: Dihydroxy-acid dehydratase (552 aa).

Residue Asp78 participates in Mg(2+) binding. A [2Fe-2S] cluster-binding site is contributed by Cys119. The Mg(2+) site is built by Asp120 and Lys121. Lys121 bears the N6-carboxylysine mark. Cys190 lines the [2Fe-2S] cluster pocket. Glu441 is a Mg(2+) binding site. The Proton acceptor role is filled by Ser467.

This sequence belongs to the IlvD/Edd family. As to quaternary structure, homodimer. [2Fe-2S] cluster serves as cofactor. It depends on Mg(2+) as a cofactor.

It catalyses the reaction (2R)-2,3-dihydroxy-3-methylbutanoate = 3-methyl-2-oxobutanoate + H2O. It carries out the reaction (2R,3R)-2,3-dihydroxy-3-methylpentanoate = (S)-3-methyl-2-oxopentanoate + H2O. The protein operates within amino-acid biosynthesis; L-isoleucine biosynthesis; L-isoleucine from 2-oxobutanoate: step 3/4. Its pathway is amino-acid biosynthesis; L-valine biosynthesis; L-valine from pyruvate: step 3/4. Its function is as follows. Functions in the biosynthesis of branched-chain amino acids. Catalyzes the dehydration of (2R,3R)-2,3-dihydroxy-3-methylpentanoate (2,3-dihydroxy-3-methylvalerate) into 2-oxo-3-methylpentanoate (2-oxo-3-methylvalerate) and of (2R)-2,3-dihydroxy-3-methylbutanoate (2,3-dihydroxyisovalerate) into 2-oxo-3-methylbutanoate (2-oxoisovalerate), the penultimate precursor to L-isoleucine and L-valine, respectively. The sequence is that of Dihydroxy-acid dehydratase from Ignicoccus hospitalis (strain KIN4/I / DSM 18386 / JCM 14125).